The primary structure comprises 194 residues: FMN-dependent NADH:quinone oxidoreductase (194 aa).

FMN contacts are provided by residues S9, 15 to 17, and 85 to 88; these read SIS and MYNF.

The protein belongs to the azoreductase type 1 family. As to quaternary structure, homodimer. Requires FMN as cofactor.

The catalysed reaction is 2 a quinone + NADH + H(+) = 2 a 1,4-benzosemiquinone + NAD(+). The enzyme catalyses N,N-dimethyl-1,4-phenylenediamine + anthranilate + 2 NAD(+) = 2-(4-dimethylaminophenyl)diazenylbenzoate + 2 NADH + 2 H(+). Functionally, quinone reductase that provides resistance to thiol-specific stress caused by electrophilic quinones. Its function is as follows. Also exhibits azoreductase activity. Catalyzes the reductive cleavage of the azo bond in aromatic azo compounds to the corresponding amines. This chain is FMN-dependent NADH:quinone oxidoreductase, found in Xanthomonas oryzae pv. oryzae (strain KACC10331 / KXO85).